We begin with the raw amino-acid sequence, 401 residues long: Tyrosine--tRNA ligase (401 aa).

Positions 42–51 match the 'HIGH' region motif; sequence PTAPDLHLGH. A 'KMSKS' region motif is present at residues 226–230; it reads KMSKS. K229 serves as a coordination point for ATP. In terms of domain architecture, S4 RNA-binding spans 336-397; it reads IALAQLLKQI…GKRRIAKLSI (62 aa).

It belongs to the class-I aminoacyl-tRNA synthetase family. TyrS type 2 subfamily. Homodimer.

It is found in the cytoplasm. It catalyses the reaction tRNA(Tyr) + L-tyrosine + ATP = L-tyrosyl-tRNA(Tyr) + AMP + diphosphate + H(+). In terms of biological role, catalyzes the attachment of tyrosine to tRNA(Tyr) in a two-step reaction: tyrosine is first activated by ATP to form Tyr-AMP and then transferred to the acceptor end of tRNA(Tyr). This chain is Tyrosine--tRNA ligase, found in Legionella pneumophila (strain Lens).